A 401-amino-acid polypeptide reads, in one-letter code: Large ribosomal subunit protein uL3 (401 aa).

The tract at residues M1–R21 is disordered.

Belongs to the universal ribosomal protein uL3 family.

Its subcellular location is the cytoplasm. Its function is as follows. The L3 protein is a component of the large subunit of cytoplasmic ribosomes. The polypeptide is Large ribosomal subunit protein uL3 (rpl-3) (Caenorhabditis briggsae).